The primary structure comprises 264 residues: 3'-5' ssDNA/RNA exonuclease TatD (264 aa).

E92, H128, and H153 together coordinate a divalent metal cation.

The protein belongs to the metallo-dependent hydrolases superfamily. TatD-type hydrolase family. TatD subfamily. In terms of assembly, monomer. The cofactor is Mg(2+).

The protein resides in the cytoplasm. Functionally, 3'-5' exonuclease that prefers single-stranded DNA and RNA. May play a role in the H(2)O(2)-induced DNA damage repair. This Musicola paradisiaca (strain Ech703) (Dickeya paradisiaca) protein is 3'-5' ssDNA/RNA exonuclease TatD.